A 315-amino-acid polypeptide reads, in one-letter code: Replication factor C small subunit (315 aa).

Position 43–50 (Gly-43–Thr-50) interacts with ATP.

The protein belongs to the activator 1 small subunits family. RfcS subfamily. As to quaternary structure, heteromultimer composed of small subunits (RfcS) and large subunits (RfcL).

Functionally, part of the RFC clamp loader complex which loads the PCNA sliding clamp onto DNA. In Methanococcus maripaludis (strain C5 / ATCC BAA-1333), this protein is Replication factor C small subunit.